We begin with the raw amino-acid sequence, 349 residues long: MTNITLQKQHRTLWHFIPGLALSAVITGVALWGGSIPAVAGAGFSALTLAILLGMVLGNTIYPHIWKSCDGGVLFAKQYLLRLGIILYGFRLTFSQIADVGISGIIIDVLTLSSTFLLACFLGQKVFGLDKHTSWLIGAGSSICGAAAVLATEPVVKAEASKVTVAVATVVIFGTVAIFLYPAIYPLMSQWFSPETFGIYIGSTVHEVAQVVAAGHAISPDAENAAVISKMLRVMMLAPFLILLAARVKQLSGTNSGEKSKITIPWFAILFIVVAIFNSFHLLPQSVVNMLVTLDTFLLAMAMAALGLTTHVSALKKAGAKPLLMALVLFAWLIVGGGAINYVIQSVIA.

The Periplasmic portion of the chain corresponds to 1-12 (MTNITLQKQHRT). Residues 13 to 32 (LWHFIPGLALSAVITGVALW) traverse the membrane as a helical segment. Topologically, residues 33–35 (GGS) are cytoplasmic. A helical membrane pass occupies residues 36-58 (IPAVAGAGFSALTLAILLGMVLG). At 59-99 (NTIYPHIWKSCDGGVLFAKQYLLRLGIILYGFRLTFSQIAD) the chain is on the periplasmic side. A helical transmembrane segment spans residues 100–122 (VGISGIIIDVLTLSSTFLLACFL). At 123–131 (GQKVFGLDK) the chain is on the cytoplasmic side. Residues 132 to 151 (HTSWLIGAGSSICGAAAVLA) traverse the membrane as a helical segment. Topologically, residues 152-162 (TEPVVKAEASK) are periplasmic. The chain crosses the membrane as a helical span at residues 163 to 185 (VTVAVATVVIFGTVAIFLYPAIY). The Cytoplasmic segment spans residues 186–261 (PLMSQWFSPE…SGTNSGEKSK (76 aa)). A helical transmembrane segment spans residues 262–283 (ITIPWFAILFIVVAIFNSFHLL). Residues 284-289 (PQSVVN) are Periplasmic-facing. The chain crosses the membrane as a helical span at residues 290-312 (MLVTLDTFLLAMAMAALGLTTHV). Over 313–321 (SALKKAGAK) the chain is Cytoplasmic. The helical transmembrane segment at 322–344 (PLLMALVLFAWLIVGGGAINYVI) threads the bilayer. Residues 345-349 (QSVIA) are Periplasmic-facing.

The protein belongs to the UPF0324 family.

The protein localises to the cell inner membrane. This is UPF0324 inner membrane protein YeiH (yeiH) from Escherichia coli O6:H1 (strain CFT073 / ATCC 700928 / UPEC).